The chain runs to 61 residues: Truncated 3-beta hydroxy-5-ene steroid dehydrogenase homolog (61 aa).

Belongs to the 3-beta-HSD family.

The chain is Truncated 3-beta hydroxy-5-ene steroid dehydrogenase homolog from Variola virus (isolate Human/India/Ind3/1967) (VARV).